The primary structure comprises 171 residues: Phosphopantetheine adenylyltransferase (171 aa).

T9 serves as a coordination point for substrate. ATP is bound by residues 9–10 and H17; that span reads TF. The substrate site is built by K41, L73, and R87. Residues 88 to 90, E98, and 123 to 129 contribute to the ATP site; these read GLR and YQFISGT.

This sequence belongs to the bacterial CoaD family. Homohexamer. Mg(2+) is required as a cofactor.

It is found in the cytoplasm. It catalyses the reaction (R)-4'-phosphopantetheine + ATP + H(+) = 3'-dephospho-CoA + diphosphate. The protein operates within cofactor biosynthesis; coenzyme A biosynthesis; CoA from (R)-pantothenate: step 4/5. Its function is as follows. Reversibly transfers an adenylyl group from ATP to 4'-phosphopantetheine, yielding dephospho-CoA (dPCoA) and pyrophosphate. This is Phosphopantetheine adenylyltransferase from Paraburkholderia phytofirmans (strain DSM 17436 / LMG 22146 / PsJN) (Burkholderia phytofirmans).